Consider the following 144-residue polypeptide: Small ribosomal subunit protein bS16 (144 aa).

The disordered stretch occupies residues 115–144; the sequence is NEPVAEAVTPKKKAKKDDAAAESTEAEAAE.

This sequence belongs to the bacterial ribosomal protein bS16 family.

The sequence is that of Small ribosomal subunit protein bS16 from Nocardia farcinica (strain IFM 10152).